The sequence spans 147 residues: UPF0735 ACT domain-containing protein Cthe_1377 (147 aa).

The region spanning 71–146 (TLFFTVEDYA…GVKRQEILAR (76 aa)) is the ACT domain.

The protein belongs to the UPF0735 family.

This chain is UPF0735 ACT domain-containing protein Cthe_1377, found in Acetivibrio thermocellus (strain ATCC 27405 / DSM 1237 / JCM 9322 / NBRC 103400 / NCIMB 10682 / NRRL B-4536 / VPI 7372) (Clostridium thermocellum).